We begin with the raw amino-acid sequence, 124 residues long: Fluoride-specific ion channel FluC (124 aa).

The next 4 membrane-spanning stretches (helical) occupy residues 5-27 (LFVA…LMLQ), 42-62 (ILGS…EVSP), 63-83 (EIKA…STFS), and 95-115 (LVKA…VVYL). Residues glycine 74 and threonine 77 each contribute to the Na(+) site.

The protein belongs to the fluoride channel Fluc/FEX (TC 1.A.43) family.

Its subcellular location is the cell inner membrane. It catalyses the reaction fluoride(in) = fluoride(out). Its activity is regulated as follows. Na(+) is not transported, but it plays an essential structural role and its presence is essential for fluoride channel function. Functionally, fluoride-specific ion channel. Important for reducing fluoride concentration in the cell, thus reducing its toxicity. This Shewanella piezotolerans (strain WP3 / JCM 13877) protein is Fluoride-specific ion channel FluC.